Reading from the N-terminus, the 802-residue chain is MPQSSPSTAATASDMDKNSGSNSSSASSGSSKGQQPPRSASAGPAGESKPKSDGKNSNGSKRYNRKREPSYPKNENFSNQSRRSNSQKSKTFNKTPPQRGGGSSKPFSSSSNGGRRDEVAEAQRAEFSPAQFSGPKKINLNHLLNFTFEPRGQAGHFEGSGHGSWGKRNKWGHKPFNKELFLQANCQFVVSEDQDYTANFADPDTLVNWDFVEQVRICSHEVPSCPICLYPPTAAKITRCGHIFCWACILHYLSLSERTWSKCPICYSSVHKKDLKSVVATESRQYVVGDTITMQLMKREKGVLVALPKSKWMNVDHPISLGDEQHSQYSKLLLASKEQVLHRVVLEEKVALEQQLAEEKHTPESCFIEAALQEVKIREEALSGVAGGRAEVTGVVTALEQLVLMAPLAKESAFQPRKGVLEYLSAFDEEAAQVCSLDPPGPLALPLVEEEEAVSEPEACEDLIADDSLGEGTVCAELSQEEPIAKPGFTQLSSSPCYYFYQAEDGQHMFLHPVNVRCLVREYGSLEQSPEKISATVVEIAGYSMSEDVRQRHRYLSHLPLTCEFSICELALQPPVVSKETLEMFSDDIEKRKRQRQKKAREERRRERRIELEENKRQGRYPEVHIPLENLQQFPAFNSYTCSSDSALGPTSTEGHGALSLSPLSRSPGSHADFLLTPLSPTASQGSPSFCVGSLEEDSPFLSFAQMLRVGKAKADGWPKAAPKKDDNSLAPPAPVDSDGESDNSDRVPVPSFQNSFSQAIEAAFMKLDTPATSDPLSDRGGRKRKRQKQKLLFSTSVVHTK.

Composition is skewed to low complexity over residues 1–31, 78–90, and 104–113; these read MPQSSPSTAATASDMDKNSGSNSSSASSGSS, SNQSRRSNSQKSK, and SKPFSSSSNG. The interval 1 to 134 is disordered; sequence MPQSSPSTAA…AEFSPAQFSG (134 aa). A Phosphoserine modification is found at S5. A Phosphoserine modification is found at S110. Positions 114–124 are enriched in basic and acidic residues; sequence GRRDEVAEAQR. Residue S128 is modified to Phosphoserine. The RING-type zinc-finger motif lies at 225 to 267; the sequence is CPICLYPPTAAKITRCGHIFCWACILHYLSLSERTWSKCPICY. Over residues 645–654 the composition is skewed to polar residues; that stretch reads DSALGPTSTE. Disordered stretches follow at residues 645–664, 716–753, and 767–802; these read DSALGPTSTEGHGALSLSPL, DGWPKAAPKKDDNSLAPPAPVDSDGESDNSDRVPVPSF, and KLDTPATSDPLSDRGGRKRKRQKQKLLFSTSVVHTK. A compositionally biased stretch (basic and acidic residues) spans 716-728; it reads DGWPKAAPKKDDN. The span at 793-802 shows a compositional bias: polar residues; it reads LFSTSVVHTK.

It belongs to the RNF10 family. In terms of assembly, interacts with MEOX2.

It is found in the cytoplasm. The protein resides in the nucleus. The catalysed reaction is S-ubiquitinyl-[E2 ubiquitin-conjugating enzyme]-L-cysteine + [acceptor protein]-L-lysine = [E2 ubiquitin-conjugating enzyme]-L-cysteine + N(6)-ubiquitinyl-[acceptor protein]-L-lysine.. Its pathway is protein modification; protein ubiquitination. In terms of biological role, E3 ubiquitin-protein ligase that catalyzes monoubiquitination of 40S ribosomal proteins RPS2/us5 and RPS3/us3 in response to ribosome stalling. Part of a ribosome quality control that takes place when ribosomes have stalled during translation initiation (iRQC): RNF10 acts by mediating monoubiquitination of RPS2/us5 and RPS3/us3, promoting their degradation by the proteasome. Also promotes ubiquitination of 40S ribosomal proteins in response to ribosome stalling during translation elongation. The action of RNF10 in iRQC is counteracted by USP10. May also act as a transcriptional factor involved in the regulation of MAG (Myelin-associated glycoprotein) expression. Acts as a regulator of Schwann cell differentiation and myelination. This Rattus norvegicus (Rat) protein is E3 ubiquitin-protein ligase RNF10.